Consider the following 160-residue polypeptide: Ribosomal RNA large subunit methyltransferase H (160 aa).

Residues 44–63 (LPESRASNSATRKREEAVQI) are disordered. S-adenosyl-L-methionine contacts are provided by residues Leu76, Gly108, and 127–132 (LGKMTW).

The protein belongs to the RNA methyltransferase RlmH family. Homodimer.

It localises to the cytoplasm. It carries out the reaction pseudouridine(1915) in 23S rRNA + S-adenosyl-L-methionine = N(3)-methylpseudouridine(1915) in 23S rRNA + S-adenosyl-L-homocysteine + H(+). Its function is as follows. Specifically methylates the pseudouridine at position 1915 (m3Psi1915) in 23S rRNA. The chain is Ribosomal RNA large subunit methyltransferase H from Allorhizobium ampelinum (strain ATCC BAA-846 / DSM 112012 / S4) (Agrobacterium vitis (strain S4)).